We begin with the raw amino-acid sequence, 265 residues long: Undecaprenyl-diphosphatase (265 aa).

Transmembrane regions (helical) follow at residues 38-58, 75-95, 108-128, 135-155, 181-201, 215-235, and 244-264; these read RSDF…CLAL, RDYV…GLIV, PVAW…HFAG, VVTW…GVFP, FVFM…LLEM, VAVA…WLLG, and VFAV…PAAA.

This sequence belongs to the UppP family.

The protein resides in the cell inner membrane. The enzyme catalyses di-trans,octa-cis-undecaprenyl diphosphate + H2O = di-trans,octa-cis-undecaprenyl phosphate + phosphate + H(+). Catalyzes the dephosphorylation of undecaprenyl diphosphate (UPP). Confers resistance to bacitracin. The sequence is that of Undecaprenyl-diphosphatase from Xanthomonas axonopodis pv. citri (strain 306).